The chain runs to 1060 residues: Histone lysine demethylase PHF8 (1060 aa).

The PHD-type zinc-finger motif lies at 41–92 (PVYCLCRLPYDVTRFMIECDMCQDWFHGSCVGVEEEKAADIDLYHCPNCEVL). Phosphoserine; by CDK1 is present on Ser-69. The interval 100–120 (KRRGSSKGHDTHKGKPVKTGS) is disordered. Positions 101–115 (RRGSSKGHDTHKGKP) are linker. Ser-120 bears the Phosphoserine; by CDK1 mark. The 157-residue stretch at 231 to 387 (FSDTRLSNLV…MQLKAYEIEK (157 aa)) folds into the JmjC domain. A substrate-binding site is contributed by Thr-280. The Fe cation site is built by His-283 and Asp-285. A substrate-binding site is contributed by Lys-300. Position 355 (His-355) interacts with Fe cation. The segment covering 508-517 (AHSTSVSMSR) has biased composition (polar residues). Residues 508 to 534 (AHSTSVSMSRLSLPSKNGSKKKGLKPK) form a disordered region. The residue at position 651 (Ser-651) is a Phosphoserine. Residue Tyr-704 is modified to Phosphotyrosine. 2 positions are modified to phosphothreonine: Thr-705 and Thr-706. Position 722 is a phosphoserine (Ser-722). Disordered regions lie at residues 768 to 840 (QSSS…EQDS), 852 to 902 (YPSL…GTRV), and 915 to 1046 (KLAQ…KQRL). Low complexity-rich tracts occupy residues 769–778 (SSSSSPATSS) and 785–804 (GGQDRSSGSSSSGLGTVSNS). Phosphoserine occurs at positions 804, 826, 834, 854, 857, and 880. Acidic residues predominate over residues 826 to 839 (SEEEEENASLDEQD). Residues 891–900 (KQDRPVREGT) are compositionally biased toward basic and acidic residues. The span at 924–934 (AQKKKYIKKKP) shows a compositional bias: basic residues. Residues 1018 to 1030 (RRPSVGSQSNQAG) show a composition bias toward polar residues.

Belongs to the JHDM1 histone demethylase family. JHDM1D subfamily. Interacts with POLR1B, UBTF, SETD1A, HCFC1, E2F1 and ZNF711. Interacts with ZNF263; recruited to the SIX3 promoter along with other proteins involved in chromatin modification and transcriptional corepression where it contributes to transcriptional repression. It depends on Fe(2+) as a cofactor. In terms of processing, phosphorylation at Ser-69 and Ser-120 are required for dissociation from chromatin and accumulation of H4K20Me1 levels during prophase.

The protein localises to the nucleus. It localises to the nucleolus. The catalysed reaction is N(6),N(6)-dimethyl-L-lysyl(36)-[histone H3] + 2 2-oxoglutarate + 2 O2 = L-lysyl(36)-[histone H3] + 2 formaldehyde + 2 succinate + 2 CO2. It carries out the reaction N(6),N(6)-dimethyl-L-lysyl(9)-[histone H3] + 2 2-oxoglutarate + 2 O2 = L-lysyl(9)-[histone H3] + 2 formaldehyde + 2 succinate + 2 CO2. Its function is as follows. Histone lysine demethylase with selectivity for the di- and monomethyl states that plays a key role cell cycle progression, rDNA transcription and brain development. Demethylates mono- and dimethylated histone H3 'Lys-9' residue (H3K9Me1 and H3K9Me2), dimethylated H3 'Lys-27' (H3K27Me2) and monomethylated histone H4 'Lys-20' residue (H4K20Me1). Acts as a transcription activator as H3K9Me1, H3K9Me2, H3K27Me2 and H4K20Me1 are epigenetic repressive marks. Involved in cell cycle progression by being required to control G1-S transition. Acts as a coactivator of rDNA transcription, by activating polymerase I (pol I) mediated transcription of rRNA genes. Required for brain development, probably by regulating expression of neuron-specific genes. Only has activity toward H4K20Me1 when nucleosome is used as a substrate and when not histone octamer is used as substrate. May also have weak activity toward dimethylated H3 'Lys-36' (H3K36Me2), however, the relevance of this result remains unsure in vivo. Specifically binds trimethylated 'Lys-4' of histone H3 (H3K4me3), affecting histone demethylase specificity: has weak activity toward H3K9Me2 in absence of H3K4me3, while it has high activity toward H3K9me2 when binding H3K4me3. Positively modulates transcription of histone demethylase KDM5C, acting synergistically with transcription factor ARX; synergy may be related to enrichment of histone H3K4me3 in regulatory elements. The protein is Histone lysine demethylase PHF8 (PHF8) of Homo sapiens (Human).